A 532-amino-acid polypeptide reads, in one-letter code: uncharacterized protein (532 aa).

A run of 5 helical transmembrane segments spans residues 11 to 31 (YLSH…ALII), 51 to 71 (IEPF…KIFF), 126 to 146 (LIDI…YTLW), 147 to 167 (ILYN…IIVF), and 231 to 253 (YVES…VLLI). One can recognise an ABC transporter domain in the interval 315-531 (ICINKLVYEY…MIIPMNNGII (217 aa)). 349 to 356 (GKSGSGKS) is an ATP binding site.

It is found in the membrane. This is an uncharacterized protein from Acanthamoeba polyphaga mimivirus (APMV).